Here is a 427-residue protein sequence, read N- to C-terminus: 3-phosphoshikimate 1-carboxyvinyltransferase (427 aa).

K20, S21, and R25 together coordinate 3-phosphoshikimate. K20 is a binding site for phosphoenolpyruvate. Positions 92 and 120 each coordinate phosphoenolpyruvate. The 3-phosphoshikimate site is built by S165, Q167, D313, and K340. Q167 is a binding site for phosphoenolpyruvate. D313 functions as the Proton acceptor in the catalytic mechanism. Residues R344 and R388 each coordinate phosphoenolpyruvate.

It belongs to the EPSP synthase family. In terms of assembly, monomer.

The protein resides in the cytoplasm. The catalysed reaction is 3-phosphoshikimate + phosphoenolpyruvate = 5-O-(1-carboxyvinyl)-3-phosphoshikimate + phosphate. It functions in the pathway metabolic intermediate biosynthesis; chorismate biosynthesis; chorismate from D-erythrose 4-phosphate and phosphoenolpyruvate: step 6/7. Catalyzes the transfer of the enolpyruvyl moiety of phosphoenolpyruvate (PEP) to the 5-hydroxyl of shikimate-3-phosphate (S3P) to produce enolpyruvyl shikimate-3-phosphate and inorganic phosphate. The chain is 3-phosphoshikimate 1-carboxyvinyltransferase from Geobacillus kaustophilus (strain HTA426).